A 311-amino-acid polypeptide reads, in one-letter code: Ribosomal RNA small subunit methyltransferase H (311 aa).

Residues Gly-34–His-36, Asp-54, Phe-78, Asp-100, and Gln-107 each bind S-adenosyl-L-methionine.

Belongs to the methyltransferase superfamily. RsmH family.

The protein localises to the cytoplasm. The enzyme catalyses cytidine(1402) in 16S rRNA + S-adenosyl-L-methionine = N(4)-methylcytidine(1402) in 16S rRNA + S-adenosyl-L-homocysteine + H(+). Its function is as follows. Specifically methylates the N4 position of cytidine in position 1402 (C1402) of 16S rRNA. The polypeptide is Ribosomal RNA small subunit methyltransferase H (Hamiltonella defensa subsp. Acyrthosiphon pisum (strain 5AT)).